Here is a 397-residue protein sequence, read N- to C-terminus: Enoyl-[acyl-carrier-protein] reductase [NADH] (397 aa).

Residues 48–53 (GASTGY), 74–75 (FE), 111–112 (DA), and 139–140 (VA) contribute to the NAD(+) site. Tyrosine 225 contacts substrate. The active-site Proton donor is the tyrosine 235. Residues lysine 244 and 273-275 (VVT) contribute to the NAD(+) site.

It belongs to the TER reductase family. Monomer.

It catalyses the reaction a 2,3-saturated acyl-[ACP] + NAD(+) = a (2E)-enoyl-[ACP] + NADH + H(+). It functions in the pathway lipid metabolism; fatty acid biosynthesis. In terms of biological role, involved in the final reduction of the elongation cycle of fatty acid synthesis (FAS II). Catalyzes the reduction of a carbon-carbon double bond in an enoyl moiety that is covalently linked to an acyl carrier protein (ACP). The sequence is that of Enoyl-[acyl-carrier-protein] reductase [NADH] from Burkholderia pseudomallei (strain 668).